Here is a 428-residue protein sequence, read N- to C-terminus: Serine--tRNA ligase (428 aa).

Position 231 to 233 (231 to 233 (TAE)) interacts with L-serine. Residue 262–264 (RSE) coordinates ATP. E285 serves as a coordination point for L-serine. ATP is bound at residue 349 to 352 (EISS). Residue S385 coordinates L-serine.

The protein belongs to the class-II aminoacyl-tRNA synthetase family. Type-1 seryl-tRNA synthetase subfamily. As to quaternary structure, homodimer. The tRNA molecule binds across the dimer.

The protein localises to the cytoplasm. The catalysed reaction is tRNA(Ser) + L-serine + ATP = L-seryl-tRNA(Ser) + AMP + diphosphate + H(+). It catalyses the reaction tRNA(Sec) + L-serine + ATP = L-seryl-tRNA(Sec) + AMP + diphosphate + H(+). It functions in the pathway aminoacyl-tRNA biosynthesis; selenocysteinyl-tRNA(Sec) biosynthesis; L-seryl-tRNA(Sec) from L-serine and tRNA(Sec): step 1/1. In terms of biological role, catalyzes the attachment of serine to tRNA(Ser). Is also able to aminoacylate tRNA(Sec) with serine, to form the misacylated tRNA L-seryl-tRNA(Sec), which will be further converted into selenocysteinyl-tRNA(Sec). This chain is Serine--tRNA ligase, found in Staphylococcus aureus (strain bovine RF122 / ET3-1).